Reading from the N-terminus, the 432-residue chain is GTPase Obg (432 aa).

Residues 1-159 form the Obg domain; sequence MKFIDTAKFT…YEVKAELKVL (159 aa). The OBG-type G domain occupies 160-332; sequence ADVGFVGLPN…LLLKIAKELE (173 aa). GTP-binding positions include 166–173, 191–195, 213–216, 284–287, and 313–315; these read GLPNAGKS, FTTLN, DLPG, NKMD, and SGL. 2 residues coordinate Mg(2+): Ser173 and Thr193. One can recognise an OCT domain in the interval 354 to 432; it reads RLEEDEEDIQ…VFEYELEWMD (79 aa).

Belongs to the TRAFAC class OBG-HflX-like GTPase superfamily. OBG GTPase family. In terms of assembly, monomer. Requires Mg(2+) as cofactor.

It is found in the cytoplasm. Functionally, an essential GTPase which binds GTP, GDP and possibly (p)ppGpp with moderate affinity, with high nucleotide exchange rates and a fairly low GTP hydrolysis rate. Plays a role in control of the cell cycle, stress response, ribosome biogenesis and in those bacteria that undergo differentiation, in morphogenesis control. This chain is GTPase Obg, found in Mesoplasma florum (strain ATCC 33453 / NBRC 100688 / NCTC 11704 / L1) (Acholeplasma florum).